The following is a 157-amino-acid chain: Cytochrome P450 monooxygenase atG (157 aa).

Cys97 lines the heme pocket.

It belongs to the cytochrome P450 family. It depends on heme as a cofactor.

Its pathway is secondary metabolite biosynthesis. Functionally, cytochrome P450 monooxygenase; part of the gene cluster that mediates the biosynthesis of terreic acid, a quinone epoxide inhibitor of Bruton's tyrosine kinase (BTK). The first step of the pathway is the synthesis of 6-methylsalicylic acid (6-MSA) by the 6-methylsalicylic acid synthase atX. In the biosynthesis of 6-MSA, atX utilizes one acetyl-CoA and three malonyl-CoAs as its substrates and catalyzes a series of programmed reactions including Claisen condensation, reduction, aldol cyclization, and the hydrolytic cleavage that yields 6-MSA. The 6-methylsalicylate 1-monooxygenase atA then catalyzes the decarboxylative hydroxylation of 6-MSA to 3-methylcatechol. The next step is the conversion of 3-methylcatechol to 3-methyl-1,2,4-benzenetriol by cytochrome P450 monooxygenase atE, which is enhanced by cytochrome P450 monooxygenase atG. Then, the epoxidase atD catalyzes the epoxidation and hydroxyl oxidation of 3-methyl-1,2,4-benzenetriol to terremutin. Lastly, GMC oxidoreductase atC oxidizes terremutin to terreic acid. The sequence is that of Cytochrome P450 monooxygenase atG from Aspergillus terreus (strain NIH 2624 / FGSC A1156).